A 408-amino-acid chain; its full sequence is tRNA(Met) cytidine acetate ligase (408 aa).

ATP-binding positions include I7 to H20, G102, N170, and R195 to I196.

The protein belongs to the TmcAL family.

The protein localises to the cytoplasm. It catalyses the reaction cytidine(34) in elongator tRNA(Met) + acetate + ATP = N(4)-acetylcytidine(34) in elongator tRNA(Met) + AMP + diphosphate. In terms of biological role, catalyzes the formation of N(4)-acetylcytidine (ac(4)C) at the wobble position of elongator tRNA(Met), using acetate and ATP as substrates. First activates an acetate ion to form acetyladenylate (Ac-AMP) and then transfers the acetyl group to tRNA to form ac(4)C34. The protein is tRNA(Met) cytidine acetate ligase of Clostridium kluyveri (strain NBRC 12016).